Here is a 95-residue protein sequence, read N- to C-terminus: Small ribosomal subunit protein bS16 (95 aa).

Belongs to the bacterial ribosomal protein bS16 family.

The polypeptide is Small ribosomal subunit protein bS16 (Thermotoga neapolitana (strain ATCC 49049 / DSM 4359 / NBRC 107923 / NS-E)).